A 132-amino-acid chain; its full sequence is Small ribosomal subunit protein uS19 (132 aa).

This sequence belongs to the universal ribosomal protein uS19 family.

Its function is as follows. Protein S19 forms a complex with S13 that binds strongly to the 16S ribosomal RNA. The sequence is that of Small ribosomal subunit protein uS19 (rps19) from Pyrococcus horikoshii (strain ATCC 700860 / DSM 12428 / JCM 9974 / NBRC 100139 / OT-3).